Consider the following 308-residue polypeptide: Ribosomal RNA small subunit methyltransferase H (308 aa).

S-adenosyl-L-methionine is bound by residues 35–37 (GGH), aspartate 55, phenylalanine 79, aspartate 100, and glutamine 107.

Belongs to the methyltransferase superfamily. RsmH family.

It is found in the cytoplasm. The enzyme catalyses cytidine(1402) in 16S rRNA + S-adenosyl-L-methionine = N(4)-methylcytidine(1402) in 16S rRNA + S-adenosyl-L-homocysteine + H(+). Its function is as follows. Specifically methylates the N4 position of cytidine in position 1402 (C1402) of 16S rRNA. In Dechloromonas aromatica (strain RCB), this protein is Ribosomal RNA small subunit methyltransferase H.